The sequence spans 674 residues: MSKVFKLNSEFKPAGDQPEAIRRLEEGLEDGLAHQTLLGVTGSGKTFTVANVIADLNRPTMVLAPNKTLAAQLYGEMKEFFPDNAVEYFVSYYDYYQPEAYVPSSDTFIEKDASVNEHIEQMRLSATKALLERRDVVVVASVSAIYGLGDPDLYLKMMLHLSRGMVIDQRAILRRLAELQYTRNDQAFQRGTFRVRGEVIDIFPAESDDYALRVELFDEEVERLSIFDPLTGQIESVIPRYTIYPKTHYVTPRERILQAMEEIKDELVERKKVLLDNNKLLEEQRLSQRTQFDLEMMNELGYCSGIENYSRYLSGRGPGEAPPTLFDYLPADGLLVIDESHVTIPQIGGMYRGDRARKETLVEYGFRLPSALDNRPMKFEEFEGLAPQTIYVSATPGNYELEKSGGEVIDQVVRPTGLLDPIVEVRPVGTQVDDLLSEIRQRVAINERVLVTVLTKRMAEDLTEYLTEHGERVRYLHSDIDTVERVEIIRDLRLGKFDVLVGINLLREGLDMPEVSLVAILDADKEGFLRSERSLIQTIGRAARNLNGKAILYGDKITPSMARAIGETERRREKQQLHNEEHGIVPQGLNKKISDILELGQGLAKNKAKPRNMKGRSIVEDDPAHVDLTPQGLQKRIHQLEAQMQQHAQNLEFEEAAQVRDQLHQVRELFIAAS.

In terms of domain architecture, Helicase ATP-binding spans 26 to 183 (EGLEDGLAHQ…RRLAELQYTR (158 aa)). Residue 39–46 (GVTGSGKT) coordinates ATP. Positions 92-115 (YYDYYQPEAYVPSSDTFIEKDASV) match the Beta-hairpin motif. The 167-residue stretch at 431 to 597 (QVDDLLSEIR…GLNKKISDIL (167 aa)) folds into the Helicase C-terminal domain. One can recognise a UVR domain in the interval 634–669 (QKRIHQLEAQMQQHAQNLEFEEAAQVRDQLHQVREL).

It belongs to the UvrB family. As to quaternary structure, forms a heterotetramer with UvrA during the search for lesions. Interacts with UvrC in an incision complex.

It is found in the cytoplasm. Functionally, the UvrABC repair system catalyzes the recognition and processing of DNA lesions. A damage recognition complex composed of 2 UvrA and 2 UvrB subunits scans DNA for abnormalities. Upon binding of the UvrA(2)B(2) complex to a putative damaged site, the DNA wraps around one UvrB monomer. DNA wrap is dependent on ATP binding by UvrB and probably causes local melting of the DNA helix, facilitating insertion of UvrB beta-hairpin between the DNA strands. Then UvrB probes one DNA strand for the presence of a lesion. If a lesion is found the UvrA subunits dissociate and the UvrB-DNA preincision complex is formed. This complex is subsequently bound by UvrC and the second UvrB is released. If no lesion is found, the DNA wraps around the other UvrB subunit that will check the other stand for damage. This Erwinia tasmaniensis (strain DSM 17950 / CFBP 7177 / CIP 109463 / NCPPB 4357 / Et1/99) protein is UvrABC system protein B.